The following is a 175-amino-acid chain: Translation initiation factor IF-3 (175 aa).

This sequence belongs to the IF-3 family. As to quaternary structure, monomer.

Its subcellular location is the cytoplasm. Its function is as follows. IF-3 binds to the 30S ribosomal subunit and shifts the equilibrium between 70S ribosomes and their 50S and 30S subunits in favor of the free subunits, thus enhancing the availability of 30S subunits on which protein synthesis initiation begins. This chain is Translation initiation factor IF-3, found in Staphylococcus epidermidis (strain ATCC 35984 / DSM 28319 / BCRC 17069 / CCUG 31568 / BM 3577 / RP62A).